Consider the following 750-residue polypeptide: Small G protein signaling modulator 3 (750 aa).

The Rab-GAP TBC domain occupies 114–305 (GIPHGMRPQL…RIWDLFFYEG (192 aa)). S406 carries the post-translational modification Phosphoserine. Positions 415–439 (EDDLEALKAKNIKQTELVADLREAI) form a coiled coil. An SH3 domain is found at 480–539 (SHRRRAKALLDFERHDDDELGFRKNDIITIISQKDEHCWVGELNGLRGWFPAKFVEVLDE). Residues 555-718 (GVTDLVRGTL…FAFSLSQDWE (164 aa)) form the RUN domain.

Belongs to the small G protein signaling modulator family. Interacts with GJA1. Interaction with GJA1 induces its degradation. Interacts via its RUN domain with the C-terminal region of NF2. Interacts with RAB3A, RAB4A, RAB5A, RAB8A, RAB11A, RAP1A, RAP1B, RAP2A, RAP2B and PDCD6I. No interaction with RAB27A. As to expression, widely expressed.

Its subcellular location is the cytoplasm. May play a cooperative role in NF2-mediated growth suppression of cells. This chain is Small G protein signaling modulator 3, found in Mus musculus (Mouse).